Consider the following 71-residue polypeptide: Large ribosomal subunit protein bL31 (71 aa).

Belongs to the bacterial ribosomal protein bL31 family. Type A subfamily. In terms of assembly, part of the 50S ribosomal subunit.

Binds the 23S rRNA. The chain is Large ribosomal subunit protein bL31 (rpmE) from Mycoplasmopsis synoviae (strain 53) (Mycoplasma synoviae).